A 305-amino-acid chain; its full sequence is Probable aspartoacylase (305 aa).

Zn(2+) is bound by residues His-13 and Glu-16. Residues Arg-55 and 62–63 (NR) contribute to the substrate site. His-105 lines the Zn(2+) pocket. Residues Glu-163 and Tyr-273 each coordinate substrate.

Belongs to the AspA/AstE family. Aspartoacylase subfamily. It depends on Zn(2+) as a cofactor.

The catalysed reaction is an N-acyl-L-aspartate + H2O = a carboxylate + L-aspartate. This Prochlorococcus marinus (strain NATL1A) protein is Probable aspartoacylase.